Reading from the N-terminus, the 358-residue chain is Probable G-protein coupled receptor 25 (358 aa).

The Extracellular portion of the chain corresponds to 1–43 (MQSTEPWSPSWGTLSWDYSGSGSLDQVELCPAWNLPYGHAIIP). Residues 44-64 (ALYLAAFAVGLPGNAFVVWLL) traverse the membrane as a helical segment. At 65-76 (SRQRGPRRLVDT) the chain is on the cytoplasmic side. Residues 77-97 (FVLHLAAADLGFVLTLPLWAA) traverse the membrane as a helical segment. At 98–113 (AEARGGLWPFGDGLCK) the chain is on the extracellular side. Cysteines 112 and 191 form a disulfide. A helical membrane pass occupies residues 114–134 (VSSFALAVTRCAGALLLAGMS). Residues 135–155 (VDRYLAVGRPLSARPLRSARC) lie on the Cytoplasmic side of the membrane. The chain crosses the membrane as a helical span at residues 156 to 176 (VRAVCGAAWAAAFLAGLPALL). Residues 177–200 (YRGLQPSLDGVGSQCAEEPWEALQ) are Extracellular-facing. The chain crosses the membrane as a helical span at residues 201 to 221 (GVGLLLLLLTFALPLAVTLIC). The Cytoplasmic portion of the chain corresponds to 222–239 (YWRVSRRLPRVGRARSNS). A helical membrane pass occupies residues 240–260 (LRIIFTVESVFVGCWLPFGVL). Over 261–284 (RSLFHLARLQALPLPCSLLLALRW) the chain is Extracellular. Residues 285-307 (GLTVTTCLAFVNSSANPVIYLLL) traverse the membrane as a helical segment. Residues 308–358 (DRSFRARARFGLCARAGRQVRRISSASSLSRDDSSVFRGRSPKVNSASATW) are Cytoplasmic-facing. The disordered stretch occupies residues 339 to 358 (DDSSVFRGRSPKVNSASATW).

This sequence belongs to the G-protein coupled receptor 1 family.

The protein localises to the membrane. In terms of biological role, orphan receptor. The polypeptide is Probable G-protein coupled receptor 25 (Gpr25) (Mus musculus (Mouse)).